The chain runs to 356 residues: Histidinol-phosphate aminotransferase 1 (356 aa).

Lysine 213 is modified (N6-(pyridoxal phosphate)lysine).

It belongs to the class-II pyridoxal-phosphate-dependent aminotransferase family. Histidinol-phosphate aminotransferase subfamily. In terms of assembly, homodimer. Pyridoxal 5'-phosphate serves as cofactor.

It carries out the reaction L-histidinol phosphate + 2-oxoglutarate = 3-(imidazol-4-yl)-2-oxopropyl phosphate + L-glutamate. It participates in amino-acid biosynthesis; L-histidine biosynthesis; L-histidine from 5-phospho-alpha-D-ribose 1-diphosphate: step 7/9. The polypeptide is Histidinol-phosphate aminotransferase 1 (hisC1) (Bordetella parapertussis (strain 12822 / ATCC BAA-587 / NCTC 13253)).